The primary structure comprises 209 residues: Casparian strip membrane protein 1 (209 aa).

At 1-46 (MEKSESTKIDVVETNKERKGKAPLLGKAPVVAAAVVHAKGGGAKRG) the chain is on the cytoplasmic side. The chain crosses the membrane as a helical span at residues 47-67 (IAIFDLILRIAAFASALGAAV). Topologically, residues 68–96 (AMATTEETLPFFTQFFQFEASYDDLPTFT) are extracellular. Residues 97–117 (FFVVAMAIVVAYLVLSVPFSI) traverse the membrane as a helical segment. The Cytoplasmic portion of the chain corresponds to 118–129 (VCIVRPHAVVPR). A helical transmembrane segment spans residues 130-150 (LLLIIFDTVIIALTTGAAGSS). The Extracellular segment spans residues 151 to 179 (AAIVYLAHNGNQDANWLAICQQFGDFCQR). Residues 180-200 (VSGAVVAAFVTVVILIFLVVL) form a helical membrane-spanning segment. At 201–209 (SASALRRHH) the chain is on the cytoplasmic side.

This sequence belongs to the Casparian strip membrane proteins (CASP) family. In terms of assembly, homodimer and heterodimers.

The protein localises to the cell membrane. In terms of biological role, regulates membrane-cell wall junctions and localized cell wall deposition. Required for establishment of the Casparian strip membrane domain (CSD) and the subsequent formation of Casparian strips, a cell wall modification of the root endodermis that determines an apoplastic barrier between the intraorganismal apoplasm and the extraorganismal apoplasm and prevents lateral diffusion. The sequence is that of Casparian strip membrane protein 1 from Nicotiana tabacum (Common tobacco).